A 631-amino-acid chain; its full sequence is Phosphomethylpyrimidine synthase (631 aa).

Residues Asn-239, Met-268, Tyr-297, His-333, 353–355, 394–397, and Glu-433 contribute to the substrate site; these read SRG and DGLR. Residue His-437 participates in Zn(2+) binding. Tyr-460 lines the substrate pocket. His-501 contacts Zn(2+). Cys-581, Cys-584, and Cys-589 together coordinate [4Fe-4S] cluster.

Belongs to the ThiC family. Homodimer. It depends on [4Fe-4S] cluster as a cofactor.

It catalyses the reaction 5-amino-1-(5-phospho-beta-D-ribosyl)imidazole + S-adenosyl-L-methionine = 4-amino-2-methyl-5-(phosphooxymethyl)pyrimidine + CO + 5'-deoxyadenosine + formate + L-methionine + 3 H(+). The protein operates within cofactor biosynthesis; thiamine diphosphate biosynthesis. In terms of biological role, catalyzes the synthesis of the hydroxymethylpyrimidine phosphate (HMP-P) moiety of thiamine from aminoimidazole ribotide (AIR) in a radical S-adenosyl-L-methionine (SAM)-dependent reaction. In Klebsiella pneumoniae (strain 342), this protein is Phosphomethylpyrimidine synthase.